Consider the following 181-residue polypeptide: Crossover junction endodeoxyribonuclease RuvC (181 aa).

Residues aspartate 7, glutamate 67, and aspartate 139 contribute to the active site. Mg(2+) is bound by residues aspartate 7, glutamate 67, and aspartate 139.

This sequence belongs to the RuvC family. In terms of assembly, homodimer which binds Holliday junction (HJ) DNA. The HJ becomes 2-fold symmetrical on binding to RuvC with unstacked arms; it has a different conformation from HJ DNA in complex with RuvA. In the full resolvosome a probable DNA-RuvA(4)-RuvB(12)-RuvC(2) complex forms which resolves the HJ. Requires Mg(2+) as cofactor.

Its subcellular location is the cytoplasm. It catalyses the reaction Endonucleolytic cleavage at a junction such as a reciprocal single-stranded crossover between two homologous DNA duplexes (Holliday junction).. Its function is as follows. The RuvA-RuvB-RuvC complex processes Holliday junction (HJ) DNA during genetic recombination and DNA repair. Endonuclease that resolves HJ intermediates. Cleaves cruciform DNA by making single-stranded nicks across the HJ at symmetrical positions within the homologous arms, yielding a 5'-phosphate and a 3'-hydroxyl group; requires a central core of homology in the junction. The consensus cleavage sequence is 5'-(A/T)TT(C/G)-3'. Cleavage occurs on the 3'-side of the TT dinucleotide at the point of strand exchange. HJ branch migration catalyzed by RuvA-RuvB allows RuvC to scan DNA until it finds its consensus sequence, where it cleaves and resolves the cruciform DNA. The protein is Crossover junction endodeoxyribonuclease RuvC of Bordetella avium (strain 197N).